A 211-amino-acid polypeptide reads, in one-letter code: Eukaryotic translation initiation factor 4E (211 aa).

It belongs to the eukaryotic initiation factor 4E family. As to quaternary structure, eIF4F is a multi-subunit complex, the composition of which varies with external and internal environmental conditions. It is composed of at least eIF4A, eIF4E and eIF4G. eIF4E is also known to interact with other partners.

Its function is as follows. Recognizes and binds the 7-methylguanosine-containing mRNA cap during an early step in the initiation of protein synthesis and facilitates ribosome binding by inducing the unwinding of the mRNAs secondary structures. The chain is Eukaryotic translation initiation factor 4E (TIF45) from Eremothecium gossypii (strain ATCC 10895 / CBS 109.51 / FGSC 9923 / NRRL Y-1056) (Yeast).